A 974-amino-acid polypeptide reads, in one-letter code: Mediator of RNA polymerase II transcription subunit 16 (974 aa).

The tract at residues 62–92 is disordered; the sequence is ESSSTLSTHSTTTSVNGSTTAGVGSTPNFGG. Residues 63–75 show a composition bias toward low complexity; that stretch reads SSSTLSTHSTTTS. The span at 76–92 shows a compositional bias: polar residues; that stretch reads VNGSTTAGVGSTPNFGG. The Nuclear localization signal signature appears at 889-893; it reads KLPIK.

It belongs to the Mediator complex subunit 16 family. As to quaternary structure, component of the Mediator complex, which is composed of at least 21 subunits that form three structurally distinct submodules. The Mediator head module contains MED6, MED8, MED11, SRB4/MED17, SRB5/MED18, ROX3/MED19, SRB2/MED20 and SRB6/MED22, the middle module contains MED1, MED4, NUT1/MED5, MED7, CSE2/MED9, NUT2/MED10, SRB7/MED21 and SOH1/MED31, and the tail module contains MED2, PGD1/MED3, RGR1/MED14, GAL11/MED15 and SIN4/MED16. The head and the middle modules interact directly with RNA polymerase II, whereas the elongated tail module interacts with gene-specific regulatory proteins. Interacts with HOG1. Post-translationally, phosphorylated by KIN28.

It is found in the nucleus. Its function is as follows. Component of the Mediator complex, a coactivator involved in the regulated transcription of nearly all RNA polymerase II-dependent genes. Mediator functions as a bridge to convey information from gene-specific regulatory proteins to the basal RNA polymerase II transcription machinery. The Mediator complex, having a compact conformation in its free form, is recruited to promoters by direct interactions with regulatory proteins and serves for the assembly of a functional preinitiation complex with RNA polymerase II and the general transcription factors. The Mediator complex unfolds to an extended conformation and partially surrounds RNA polymerase II, specifically interacting with the unphosphorylated form of the C-terminal domain (CTD) of RNA polymerase II. The Mediator complex dissociates from the RNA polymerase II holoenzyme and stays at the promoter when transcriptional elongation begins. In Saccharomyces cerevisiae (strain ATCC 204508 / S288c) (Baker's yeast), this protein is Mediator of RNA polymerase II transcription subunit 16 (SIN4).